Here is a 463-residue protein sequence, read N- to C-terminus: A-type ATP synthase subunit B (463 aa).

The protein belongs to the ATPase alpha/beta chains family. In terms of assembly, has multiple subunits with at least A(3), B(3), C, D, E, F, H, I and proteolipid K(x).

The protein resides in the cell membrane. Functionally, component of the A-type ATP synthase that produces ATP from ADP in the presence of a proton gradient across the membrane. The B chain is a regulatory subunit. The polypeptide is A-type ATP synthase subunit B (Desulfurococcus sp. (strain SY)).